A 324-amino-acid polypeptide reads, in one-letter code: Zinc finger C2HC domain-containing protein 1A (324 aa).

The C2HC/C3H-type 1 zinc finger occupies 15 to 44; the sequence is DLLPCKICGRTFFPLALKKHGPICQKTATK. Zn(2+) is bound by residues Cys-19, Cys-22, His-34, and Cys-38. The interval 43 to 83 is disordered; the sequence is TKKRKTFDSSRQRAEGTDIPTVKPLKPRPEPPKKPSNWRRK. Basic and acidic residues predominate over residues 48–58; sequence TFDSSRQRAEG. A C2HC/C3H-type 2 zinc finger spans residues 118-147; sequence DYIQCPYCQRRFNENAADRHINFCKEQAAR. Zn(2+) is bound by residues Cys-122, Cys-125, His-137, and Cys-141. Residues 149-225 are disordered; that stretch reads SNKGKFSTDS…NKPQTLSPSH (77 aa). Positions 176–187 are enriched in low complexity; sequence SNPPGIPSSGSS. Polar residues-rich tracts occupy residues 188-198 and 206-223; these read RLPQPSTTSKT and KASS…TLSP. A Phosphoserine modification is found at Ser-222. Position 243 is a phosphothreonine (Thr-243). The residue at position 291 (Ser-291) is a Phosphoserine.

This sequence belongs to the ZC2HC1 family. It depends on Zn(2+) as a cofactor.

The chain is Zinc finger C2HC domain-containing protein 1A (Zc2hc1a) from Mus musculus (Mouse).